Reading from the N-terminus, the 221-residue chain is Josephin-like protein (221 aa).

The disordered stretch occupies residues 1-37; sequence MESPSARTLGNSLGDDSGNGNENGNGSGNGNTTMMPH. Low complexity predominate over residues 9-20; the sequence is LGNSLGDDSGNG. The Josephin domain maps to 36–214; the sequence is PHGIYHERQT…DCKDKSQQRW (179 aa). Cysteine 49 serves as the catalytic Nucleophile. Histidine 152 functions as the Proton acceptor in the catalytic mechanism.

The enzyme catalyses Thiol-dependent hydrolysis of ester, thioester, amide, peptide and isopeptide bonds formed by the C-terminal Gly of ubiquitin (a 76-residue protein attached to proteins as an intracellular targeting signal).. In terms of biological role, may act as a deubiquitinating enzyme. The sequence is that of Josephin-like protein from Drosophila melanogaster (Fruit fly).